The following is a 260-amino-acid chain: UPF0246 protein SCO2297 (260 aa).

The protein belongs to the UPF0246 family.

The protein is UPF0246 protein SCO2297 of Streptomyces coelicolor (strain ATCC BAA-471 / A3(2) / M145).